The sequence spans 318 residues: Protein FAM228A (318 aa).

The tract at residues serine 259 to aspartate 297 is disordered.

Belongs to the FAM228 family.

The protein is Protein FAM228A (FAM228A) of Bos taurus (Bovine).